A 154-amino-acid polypeptide reads, in one-letter code: Transcription antitermination protein NusB (154 aa).

Belongs to the NusB family.

In terms of biological role, involved in transcription antitermination. Required for transcription of ribosomal RNA (rRNA) genes. Binds specifically to the boxA antiterminator sequence of the ribosomal RNA (rrn) operons. In Enterococcus faecalis (strain ATCC 700802 / V583), this protein is Transcription antitermination protein NusB.